Here is a 373-residue protein sequence, read N- to C-terminus: Cathecol O-methyltransferase 1 (373 aa).

6 residues coordinate S-adenosyl-L-homocysteine: glycine 209, aspartate 232, aspartate 252, methionine 253, methionine 265, and lysine 266. Aspartate 232 contacts S-adenosyl-L-methionine. The active-site Proton acceptor is histidine 279.

This sequence belongs to the class I-like SAM-binding methyltransferase superfamily. Cation-independent O-methyltransferase family. COMT subfamily.

It carries out the reaction catechol + S-adenosyl-L-methionine = guaiacol + S-adenosyl-L-homocysteine + H(+). In terms of biological role, O-methyltransferase that catalyzes the conversion of catechol to guaiacol. Involved in the production of guaiacol in fruits. This chain is Cathecol O-methyltransferase 1, found in Solanum lycopersicum (Tomato).